Reading from the N-terminus, the 414-residue chain is Meiotic driver wtf19 (414 aa).

Positions 1–94 (MKNKYYPVRT…RENHSSGTAD (94 aa)) are disordered. The segment covering 11–29 (SMDEMNAKNDNEIDLEKGP) has biased composition (basic and acidic residues). Polar residues predominate over residues 57–72 (GANNPNLFNTDESTTP). Helical transmembrane passes span 99 to 119 (FLIK…PAVC), 136 to 156 (WVYF…LWCF), 170 to 190 (VTVI…AQCV), 192 to 212 (VTAI…AQCV), 222 to 242 (CVKV…IGLF), 247 to 267 (EMMI…FGCV), 284 to 304 (TISA…WTLW), 311 to 331 (LQVL…MSLF), and 339 to 359 (GYEI…LYEM).

This sequence belongs to the WTF family. In terms of assembly, homomer. Forms protein aggregates. The two isoforms can interact with each other and with themselves. High sequence similarity is required for their interaction.

The protein localises to the spore membrane. The protein resides in the vacuole membrane. It is found in the ascus epiplasm. Its subcellular location is the cytoplasm. It localises to the endoplasmic reticulum membrane. Its function is as follows. Promotes unequal transmission of alleles from the parental zygote to progeny spores by acting as poison/antidote system where the poison and antidote proteins are produced from the same locus; the poison component is trans-acting and targets all spores within an ascus whereas the antidote component is spore-specific, leading to poisoning of all progeny that do not inherit the allele. Functionally, localizes isoform 2 to the vacuole thereby facilitating its degradation. Forms toxic aggregates that disrupt spore maturation. In Schizosaccharomyces kambucha (Fission yeast), this protein is Meiotic driver wtf19.